The primary structure comprises 348 residues: Protein RecA (348 aa).

65–72 contacts ATP; the sequence is GPESSGKT. The segment at 326–348 is disordered; it reads QMGSESLSSSSDDDDIKEESGEE. Over residues 336 to 348 the composition is skewed to acidic residues; it reads SDDDDIKEESGEE.

The protein belongs to the RecA family.

It localises to the cytoplasm. Can catalyze the hydrolysis of ATP in the presence of single-stranded DNA, the ATP-dependent uptake of single-stranded DNA by duplex DNA, and the ATP-dependent hybridization of homologous single-stranded DNAs. It interacts with LexA causing its activation and leading to its autocatalytic cleavage. The protein is Protein RecA of Campylobacter hominis (strain ATCC BAA-381 / DSM 21671 / CCUG 45161 / LMG 19568 / NCTC 13146 / CH001A).